The following is a 456-amino-acid chain: MKRVYFIGIGGIGMSAIARYFHAKGFNVCGYDLTPSPITDQLIKEGIEVHFSDDLNMIPKAFFSPTDSLIVYTPAVPADHSELTYFRSNGYRVVKRAEVLGEITLMERALCVAGTHGKTTTSTLLAHLLKQSHVDCNAFLGGISNNYQSNLLLSDKSDLVVVEADEFDRSFHHLKPFMAIITSADPDHMDIYGTAENYRDSFEHFTSLIQSGGALVLKYGAPVNPRLGSDVSLFTYSSDDQQADYFASDIMIRDGRLFFTWHYPGGQLEGVELGVPVRINVENAVAAMAIAHLNGVTVEELRSGIASFKGSHRRFEKVLDTERVVLIDDYAHHPVELDAAIHSVREIYSGKHIMGIFQPHLYSRTADFYQDFARSLSMLDEVVLLDIYPARELPLPGVTSRLILDLIENPNKTLVSKNDLLDYLHGNEIPDVVLILGAGDIDRLVIPVKQYLQTLC.

114 to 120 (GTHGKTT) is an ATP binding site.

Belongs to the MurCDEF family.

The protein localises to the cytoplasm. It carries out the reaction UDP-N-acetyl-alpha-D-muramate + L-alanine + ATP = UDP-N-acetyl-alpha-D-muramoyl-L-alanine + ADP + phosphate + H(+). It functions in the pathway cell wall biogenesis; peptidoglycan biosynthesis. In terms of biological role, cell wall formation. The chain is UDP-N-acetylmuramate--L-alanine ligase (murC) from Porphyromonas gingivalis (strain ATCC BAA-308 / W83).